A 297-amino-acid polypeptide reads, in one-letter code: MAQFPLFQKFQKAIQHPPALSLGLPIFLTVIFLLSQRYVWIEDDLELRSTALTNFELNRISFYPLVHATWFHLLLNLVALQPIVSQFERVNGTVRTGIVLNILAVVTAIPWCLLSIGFFPDEAVLGSSAWIFSFMGYWAIRESSKQPTTQLAPNLVVPTWLLPIIYLVVIAIVIPSSSFIGHLLGLIAGWMMALGYLDVLIEPSSKVVLWIENKISRVIDLIPSSIVTFYREEGALDTRAAARADTNRSLSVSGGNFLGFQANSSQADLEAGTRSRGNSSVDPTTSFPGTGQTLGTQ.

6 helical membrane passes run 14–34, 60–80, 98–118, 120–140, 155–175, and 179–199; these read IQHPPALSLGLPIFLTVIFLL, ISFYPLVHATWFHLLLNLVAL, IVLNILAVVTAIPWCLLSIGF, PDEAVLGSSAWIFSFMGYWAI, LVVPTWLLPIIYLVVIAIVIP, and FIGHLLGLIAGWMMALGYLDV. The active-site Nucleophile is serine 128. The active site involves histidine 182. A disordered region spans residues 268 to 297; sequence DLEAGTRSRGNSSVDPTTSFPGTGQTLGTQ. Residues 275 to 297 show a composition bias toward polar residues; sequence SRGNSSVDPTTSFPGTGQTLGTQ.

This sequence belongs to the peptidase S54 family.

It localises to the golgi apparatus membrane. It is found in the golgi apparatus. The protein localises to the cis-Golgi network membrane. It carries out the reaction Cleaves type-1 transmembrane domains using a catalytic dyad composed of serine and histidine that are contributed by different transmembrane domains.. Probable rhomboid-type serine protease that catalyzes intramembrane proteolysis. This is Rhomboid-type serine protease 2 (RBD2) from Yarrowia lipolytica (strain CLIB 122 / E 150) (Yeast).